Reading from the N-terminus, the 201-residue chain is UPF0301 protein MMAR_0053 (201 aa).

Belongs to the UPF0301 (AlgH) family.

This Mycobacterium marinum (strain ATCC BAA-535 / M) protein is UPF0301 protein MMAR_0053.